The primary structure comprises 212 residues: MIGGIDEAGRGPVIGPMVIAIVVGESDDMIKIGVRDSKRLSPGAREAVYEKILRVAACVNYVVIEPAEIDAYVSRGMLNALELKYTAQLINLCPAEYYYVDSPDVNPKRYESGLVFATGKRVIALHKGEAVPQVAAASIVAKVVRDRLIQLLKKEVGDFGSGYPSDPRTLQRLREGRMPSECIRWQWKTVGGRIGLGRNRHESGENPGDSRG.

The region spanning 1-199 is the RNase H type-2 domain; that stretch reads MIGGIDEAGR…VGGRIGLGRN (199 aa). Residues D6, E7, and D101 each coordinate a divalent metal cation.

Belongs to the RNase HII family. The cofactor is Mn(2+). Mg(2+) serves as cofactor.

It is found in the cytoplasm. It carries out the reaction Endonucleolytic cleavage to 5'-phosphomonoester.. Endonuclease that specifically degrades the RNA of RNA-DNA hybrids. This chain is Ribonuclease HII, found in Pyrobaculum aerophilum (strain ATCC 51768 / DSM 7523 / JCM 9630 / CIP 104966 / NBRC 100827 / IM2).